The chain runs to 342 residues: scyllo-inositol 2-dehydrogenase (NAD(+)) (342 aa).

This sequence belongs to the Gfo/Idh/MocA family.

It carries out the reaction scyllo-inositol + NAD(+) = scyllo-inosose + NADH + H(+). It functions in the pathway polyol metabolism. Functionally, catalyzes the reversible NAD(+)-dependent oxidation of scyllo-inositol (SI) to 2,4,6/3,5-pentahydroxycyclohexanone (scyllo-inosose or SIS). Is required for SI catabolism that allows B.subtilis to utilize SI as the sole carbon source for growth. Cannot use NADP(+) instead of NAD(+). The protein is scyllo-inositol 2-dehydrogenase (NAD(+)) of Bacillus subtilis (strain 168).